Reading from the N-terminus, the 403-residue chain is Argininosuccinate synthase (403 aa).

Residues 10–18 and A38 contribute to the ATP site; that span reads AYSGGVDTS. Y89 is an L-citrulline binding site. G119 contacts ATP. L-aspartate contacts are provided by T121, N125, and D126. An L-citrulline-binding site is contributed by N125. L-citrulline is bound by residues R129, S177, S186, E262, and Y274.

Belongs to the argininosuccinate synthase family. Type 1 subfamily. As to quaternary structure, homotetramer.

It localises to the cytoplasm. It catalyses the reaction L-citrulline + L-aspartate + ATP = 2-(N(omega)-L-arginino)succinate + AMP + diphosphate + H(+). It functions in the pathway amino-acid biosynthesis; L-arginine biosynthesis; L-arginine from L-ornithine and carbamoyl phosphate: step 2/3. The polypeptide is Argininosuccinate synthase (Synechococcus sp. (strain CC9605)).